Here is a 569-residue protein sequence, read N- to C-terminus: Protein germ cell-less (569 aa).

Positions 17 to 43 are disordered; that stretch reads SNRRKRKRSTDSSLGKDDPAQLDTTQP. In terms of domain architecture, BTB spans 66–136; the sequence is SDVAVMALDK…MYSDEIEIES (71 aa). Positions 517–553 are disordered; it reads GANSDRPLSPSSADDSAVFIGDSEPSTPSSPAPRPRI.

It localises to the cytoplasm. In terms of biological role, required for the specification of pole cells and germ cell formation. Mothers with reduced glc function give rise to sterile adult progeny that lack germ cells. The chain is Protein germ cell-less (gcl) from Drosophila melanogaster (Fruit fly).